A 344-amino-acid chain; its full sequence is Ribosomal RNA large subunit methyltransferase Cfr (344 aa).

The Proton acceptor role is filled by E90. The region spanning K97–E330 is the Radical SAM core domain. A disulfide bond links C104 and C335. [4Fe-4S] cluster is bound by residues C111, C115, and C118. Residues G157–E158, S188, S211–H213, and N292 each bind S-adenosyl-L-methionine. The S-methylcysteine intermediate role is filled by C335.

This sequence belongs to the radical SAM superfamily. RlmN family. Cfr subfamily. [4Fe-4S] cluster is required as a cofactor.

The protein resides in the cytoplasm. It catalyses the reaction adenosine(2503) in 23S rRNA + 2 reduced [2Fe-2S]-[ferredoxin] + 2 S-adenosyl-L-methionine = 8-methyladenosine(2503) in 23S rRNA + 5'-deoxyadenosine + L-methionine + 2 oxidized [2Fe-2S]-[ferredoxin] + S-adenosyl-L-homocysteine. In terms of biological role, specifically methylates position 8 of adenine 2503 in 23S rRNA. Confers resistance to some classes of antibiotics. The sequence is that of Ribosomal RNA large subunit methyltransferase Cfr from Clostridium botulinum (strain Okra / Type B1).